The following is a 207-amino-acid chain: Large ribosomal subunit protein uL4 (207 aa).

Residues 53–76 are disordered; sequence TVSEVSGTTKKPFKQKGTGNARQG.

The protein belongs to the universal ribosomal protein uL4 family. As to quaternary structure, part of the 50S ribosomal subunit.

In terms of biological role, one of the primary rRNA binding proteins, this protein initially binds near the 5'-end of the 23S rRNA. It is important during the early stages of 50S assembly. It makes multiple contacts with different domains of the 23S rRNA in the assembled 50S subunit and ribosome. Its function is as follows. Forms part of the polypeptide exit tunnel. The polypeptide is Large ribosomal subunit protein uL4 (Rickettsia bellii (strain OSU 85-389)).